The following is a 362-amino-acid chain: Solute carrier family 25 member 3 (362 aa).

Residues 1-49 (MFSSVAHLARANPFNTPHLQLVHDGLGDLRSSSPGPTGQPRRPRNLAAA) constitute a mitochondrion transit peptide. The Mitochondrial intermembrane portion of the chain corresponds to 50 to 63 (AVEEQYSCDYGSGR). Solcar repeat units lie at residues 63 to 147 (RFFI…FKVL), 160 to 244 (WRTS…TVEA), and 261 to 339 (EQLV…VKVY). A helical transmembrane segment spans residues 64-86 (FFILCGLGGIISCGTTHTALVPL). At 87–121 (DLVKCRMQVDPQKYKGIFNGFSVTLKEDGVRGLAK) the chain is on the mitochondrial matrix side. Lys-99 carries the post-translational modification N6-acetyllysine. Lys-112 carries the post-translational modification N6-methyllysine. A helical transmembrane segment spans residues 122 to 141 (GWAPTFLGYSMQGLCKFGFY). At 142-161 (EVFKVLYSNMLGEENTYLWR) the chain is on the mitochondrial intermembrane side. Residues 162-183 (TSLYLAASASAEFFADIALAPM) traverse the membrane as a helical segment. Topologically, residues 184-218 (EAAKVRIQTQPGYANTLRDAAPKMYKEEGLKAFYK) are mitochondrial matrix. Tyr-196 is modified (phosphotyrosine). Lys-209 bears the N6-acetyllysine mark. Residues 219–238 (GVAPLWMRQIPYTMMKFACF) form a helical membrane-spanning segment. The Mitochondrial intermembrane segment spans residues 239–261 (ERTVEALYKFVVPKPRSECSKPE). Residues 262–284 (QLVVTFVAGYIAGVFCAIVSHPA) form a helical membrane-spanning segment. The Mitochondrial matrix portion of the chain corresponds to 285-314 (DSVVSVLNKEKGSSASLVLKRLGFKGVWKG). The helical transmembrane segment at 315–333 (LFARIIMIGTLTALQWFIY) threads the bilayer. Residues 334–362 (DSVKVYFRLPRPPPPEMPESLKKKLGLTQ) are Mitochondrial intermembrane-facing.

Belongs to the mitochondrial carrier (TC 2.A.29) family. In terms of assembly, interacts with PPIF; the interaction is impaired by CsA.

The protein localises to the mitochondrion inner membrane. The enzyme catalyses phosphate(in) + H(+)(in) = phosphate(out) + H(+)(out). Its function is as follows. Inorganic ion transporter that transports phosphate or copper ions across the mitochondrial inner membrane into the matrix compartment. Mediates proton-coupled symport of phosphate ions necessary for mitochondrial oxidative phosphorylation of ADP to ATP. Transports copper ions probably in the form of anionic copper(I) complexes to maintain mitochondrial matrix copper pool and to supply copper for cytochrome C oxidase complex assembly. May also play a role in regulation of the mitochondrial permeability transition pore (mPTP). This Homo sapiens (Human) protein is Solute carrier family 25 member 3.